The sequence spans 682 residues: RNA helicase NPH-II (682 aa).

One can recognise a Helicase ATP-binding domain in the interval phenylalanine 181–histidine 354. Glycine 194–threonine 201 serves as a coordination point for ATP. A DEXH box motif is present at residues aspartate 303–histidine 306. The 166-residue stretch at asparagine 386–leucine 551 folds into the Helicase C-terminal domain.

The protein belongs to the DEAD box helicase family. DEAH subfamily. Monomer.

The protein resides in the virion. The enzyme catalyses ATP + H2O = ADP + phosphate + H(+). Functionally, NTP-dependent helicase that catalyzes unidirectional unwinding of 3'tailed duplex RNAs and plays an important role during transcription of early mRNAs, presumably by preventing R-loop formation behind the elongating RNA polymerase. Might also play a role in the export of newly synthesized mRNA chains out of the core into the cytoplasm. Required for replication and propagation of viral particles. In Vertebrata (FPV), this protein is RNA helicase NPH-II (NPH2).